The chain runs to 446 residues: NADH oxidase (446 aa).

Residues 7 to 11 (GTNHA), Asp32, Cys42, Val79, 109 to 112 (ATGS), Lys131, and Tyr158 contribute to the FAD site. Catalysis depends on His10, which acts as the Proton acceptor. The active-site Redox-active is Cys42. The residue at position 42 (Cys42) is a Cysteine sulfinic acid (-SO2H). NAD(+)-binding residues include Ile159, Asp178, Tyr187, and Gly244. Residue Asp282 participates in FAD binding. Residue Ala298 participates in NAD(+) binding. Residues Leu299, Ala300, and Ser301 each coordinate FAD. Position 329 (Gly329) interacts with NAD(+). An FAD-binding site is contributed by Phe427.

Belongs to the class-III pyridine nucleotide-disulfide oxidoreductase family. As to quaternary structure, homodimer. FAD serves as cofactor.

The catalysed reaction is 2 NADH + O2 + 2 H(+) = 2 NAD(+) + 2 H2O. Its activity is regulated as follows. Inhibited by hydrogen peroxide, sulfhydryl reagents and quinine, but not by EDTA. Functionally, catalyzes the four-electron reduction of molecular oxygen to water. Active on beta-NADH, but not on alpha-NADH, beta-NADPH or alpha-NADPH. Under aerobic conditions, oxygen acts as the electron acceptor. Under anaerobic conditions, DCIP and MB can replace oxygen as the electron acceptor. This Lactococcus lactis subsp. cremoris (strain MG1363) protein is NADH oxidase.